Reading from the N-terminus, the 416-residue chain is Transcription termination factor Rho (416 aa).

In terms of domain architecture, Rho RNA-BD spans 51–121 (LIYSYGELDI…LKLIYVNGEK (71 aa)). ATP-binding positions include 162 to 167 (GKGQRG), 174 to 179 (KAGKTT), and arginine 205.

The protein belongs to the Rho family. In terms of assembly, homohexamer. The homohexamer assembles into an open ring structure.

In terms of biological role, facilitates transcription termination by a mechanism that involves Rho binding to the nascent RNA, activation of Rho's RNA-dependent ATPase activity, and release of the mRNA from the DNA template. The polypeptide is Transcription termination factor Rho (Streptobacillus moniliformis (strain ATCC 14647 / DSM 12112 / NCTC 10651 / 9901)).